Consider the following 371-residue polypeptide: MSMSPKHTTPFSVSDILSPLEESYKKVGMEGGGLGAPLAAYRQGQAAPPAAAMQQHAVGHHGAVTAAYHMTAAGVPQLSHSAVGGYCNGNLGNMSELPPYQDTMRNSASGPGWYGANPDPRFPAISRFMGPASGMNMSGMGGLGSLGDVSKNMAPLPSAPRRKRRVLFSQAQVYELERRFKQQKYLSAPEREHLASMIHLTPTQVKIWFQNHRYKMKRQAKDKAAQQQLQQDSGGGGGGGGAGCPQQQQAQQQSPRRVAVPVLVKDGKPCQAGAPAPGAGSLQGHAQQQAQQQAQAAQAAAAAISVGSGGPGLGAHPGHQPGSAGQSPDLAHHAASPAALQGQVSSLSHLNSSGSDYGTMSCSTLLYGRTW.

The homeobox DNA-binding region spans 161 to 220 (RRKRRVLFSQAQVYELERRFKQQKYLSAPEREHLASMIHLTPTQVKIWFQNHRYKMKRQA). Disordered stretches follow at residues 219 to 294 (QAKD…QQQA) and 308 to 342 (SGGPGLGAHPGHQPGSAGQSPDLAHHAASPAALQG). Gly residues predominate over residues 233-243 (SGGGGGGGGAG). Low complexity-rich tracts occupy residues 244 to 253 (CPQQQQAQQQ) and 272 to 294 (AGAPAPGAGSLQGHAQQQAQQQA).

The protein belongs to the NK-2 homeobox family. Post-translationally, phosphorylated on serine residues. In terms of tissue distribution, thyroid, lung and CNS.

The protein resides in the nucleus. Functionally, transcription factor that binds and activates the promoter of thyroid specific genes such as thyroglobulin, thyroperoxidase, and thyrotropin receptor. Crucial in the maintenance of the thyroid differentiation phenotype. May play a role in lung development and surfactant homeostasis. This Canis lupus familiaris (Dog) protein is Thyroid transcription factor 1 (TITF1).